Here is a 204-residue protein sequence, read N- to C-terminus: Holliday junction branch migration complex subunit RuvA (204 aa).

The segment at 1–64 is domain I; sequence MIAKLTGILD…ETDQRLIGFT (64 aa). The tract at residues 65 to 143 is domain II; the sequence is SAGERAWFRL…GLAGYASPVG (79 aa). Positions 144-154 are flexible linker; sequence PGGEAFVAPPG. The domain III stretch occupies residues 154–204; that stretch reads GNASADAVSALQNLGFKPAVASSAVAAAVKELGEDAGLNDLVRVALKRAAG.

Belongs to the RuvA family. In terms of assembly, homotetramer. Forms an RuvA(8)-RuvB(12)-Holliday junction (HJ) complex. HJ DNA is sandwiched between 2 RuvA tetramers; dsDNA enters through RuvA and exits via RuvB. An RuvB hexamer assembles on each DNA strand where it exits the tetramer. Each RuvB hexamer is contacted by two RuvA subunits (via domain III) on 2 adjacent RuvB subunits; this complex drives branch migration. In the full resolvosome a probable DNA-RuvA(4)-RuvB(12)-RuvC(2) complex forms which resolves the HJ.

The protein resides in the cytoplasm. Its function is as follows. The RuvA-RuvB-RuvC complex processes Holliday junction (HJ) DNA during genetic recombination and DNA repair, while the RuvA-RuvB complex plays an important role in the rescue of blocked DNA replication forks via replication fork reversal (RFR). RuvA specifically binds to HJ cruciform DNA, conferring on it an open structure. The RuvB hexamer acts as an ATP-dependent pump, pulling dsDNA into and through the RuvAB complex. HJ branch migration allows RuvC to scan DNA until it finds its consensus sequence, where it cleaves and resolves the cruciform DNA. This chain is Holliday junction branch migration complex subunit RuvA, found in Novosphingobium aromaticivorans (strain ATCC 700278 / DSM 12444 / CCUG 56034 / CIP 105152 / NBRC 16084 / F199).